Reading from the N-terminus, the 350-residue chain is tRNA dimethylallyltransferase (350 aa).

The interval 1 to 20 (MMNTERPAGPLRPPHPPHPP) is disordered. Residues 10-20 (PLRPPHPPHPP) show a composition bias toward pro residues. 27 to 34 (GPTASGKT) serves as a coordination point for ATP. 29-34 (TASGKT) serves as a coordination point for substrate. 3 interaction with substrate tRNA regions span residues 52 to 55 (DSAL), 176 to 180 (QRIAR), and 273 to 278 (RCVGYR).

It belongs to the IPP transferase family. Monomer. It depends on Mg(2+) as a cofactor.

It carries out the reaction adenosine(37) in tRNA + dimethylallyl diphosphate = N(6)-dimethylallyladenosine(37) in tRNA + diphosphate. Its function is as follows. Catalyzes the transfer of a dimethylallyl group onto the adenine at position 37 in tRNAs that read codons beginning with uridine, leading to the formation of N6-(dimethylallyl)adenosine (i(6)A). The polypeptide is tRNA dimethylallyltransferase (Albidiferax ferrireducens (strain ATCC BAA-621 / DSM 15236 / T118) (Rhodoferax ferrireducens)).